The following is an 892-amino-acid chain: DNA mismatch repair protein MutS (892 aa).

634-641 contributes to the ATP binding site; the sequence is GPNMGGKS.

It belongs to the DNA mismatch repair MutS family.

This protein is involved in the repair of mismatches in DNA. It is possible that it carries out the mismatch recognition step. This protein has a weak ATPase activity. This Paraburkholderia phymatum (strain DSM 17167 / CIP 108236 / LMG 21445 / STM815) (Burkholderia phymatum) protein is DNA mismatch repair protein MutS.